A 216-amino-acid chain; its full sequence is UDP-N-acetylglucosamine transferase subunit ALG14 (216 aa).

Topologically, residues methionine 1 to cysteine 3 are lumenal. A helical membrane pass occupies residues valine 4–alanine 24. The Cytoplasmic segment spans residues valine 25–valine 216.

The protein belongs to the ALG14 family. Forms with ALG13 the active heterodimeric UDP-N-acetylglucosamine transferase complex.

The protein resides in the endoplasmic reticulum membrane. Functionally, part of the UDP-N-acetylglucosamine transferase complex that operates in the biosynthetic pathway of dolichol-linked oligosaccharides, the glycan precursors employed in protein asparagine (N)-glycosylation. The assembly of dolichol-linked oligosaccharides begins on the cytosolic side of the endoplasmic reticulum membrane and finishes in its lumen. The sequential addition of sugars to dolichol pyrophosphate produces dolichol-linked oligosaccharides containing fourteen sugars, including two GlcNAcs, nine mannoses and three glucoses. Once assembled, the oligosaccharides are transferred from the lipid to nascent proteins by oligosaccharyltransferases. Functions as a protein-membrane adapter recruiting ALG13 at the cytoplasmic face of the endoplasmic reticulum, where the complex catalyzes the second step of dolichol pyrophosphate biosynthesis, transferring a beta1,4-linked N-acetylglucosamine (GlcNAc) from UDP-GlcNAc to GlcNAc-pyrophosphatedolichol (Gn-PDol) to produce N,N'-diacetylchitobiosyl diphosphodolichol. N,N'-diacetylchitobiosyl diphosphodolichol is a substrate for ALG1, the following enzyme in the biosynthetic pathway. This is UDP-N-acetylglucosamine transferase subunit ALG14 from Rattus norvegicus (Rat).